The following is a 602-amino-acid chain: Elongation factor 4 (602 aa).

The 183-residue stretch at 2–184 (KKIRNFAIIA…RIVRDIPPPK (183 aa)) folds into the tr-type G domain. GTP-binding positions include 14–19 (DHGKST) and 131–134 (NKID).

Belongs to the TRAFAC class translation factor GTPase superfamily. Classic translation factor GTPase family. LepA subfamily.

The protein resides in the cell membrane. It catalyses the reaction GTP + H2O = GDP + phosphate + H(+). Functionally, required for accurate and efficient protein synthesis under certain stress conditions. May act as a fidelity factor of the translation reaction, by catalyzing a one-codon backward translocation of tRNAs on improperly translocated ribosomes. Back-translocation proceeds from a post-translocation (POST) complex to a pre-translocation (PRE) complex, thus giving elongation factor G a second chance to translocate the tRNAs correctly. Binds to ribosomes in a GTP-dependent manner. This chain is Elongation factor 4, found in Baumannia cicadellinicola subsp. Homalodisca coagulata.